The chain runs to 227 residues: Cytidylate kinase (227 aa).

12-20 (GPSGAGKGT) contributes to the ATP binding site.

Belongs to the cytidylate kinase family. Type 1 subfamily.

It is found in the cytoplasm. It catalyses the reaction CMP + ATP = CDP + ADP. It carries out the reaction dCMP + ATP = dCDP + ADP. The protein is Cytidylate kinase of Shigella sonnei (strain Ss046).